Reading from the N-terminus, the 993-residue chain is UPF0182 protein MAP_3291c (993 aa).

7 helical membrane passes run isoleucine 18–aspartate 38, phenylalanine 63–valine 83, leucine 113–tyrosine 133, phenylalanine 175–isoleucine 195, isoleucine 210–aspartate 230, alanine 254–phenylalanine 274, and isoleucine 287–valine 307. The segment at asparagine 903–glycine 941 is disordered. Positions serine 929–proline 939 are enriched in pro residues.

This sequence belongs to the UPF0182 family.

It is found in the cell membrane. The chain is UPF0182 protein MAP_3291c from Mycolicibacterium paratuberculosis (strain ATCC BAA-968 / K-10) (Mycobacterium paratuberculosis).